The primary structure comprises 114 residues: SOSS complex subunit C homolog (114 aa).

Over residues 1–10 the composition is skewed to polar residues; sequence MAFQQHGNQE. A disordered region spans residues 1–61; that stretch reads MAFQQHGNQE…AGNTSASRIH (61 aa).

It belongs to the SOSS-C family.

The chain is SOSS complex subunit C homolog from Nematostella vectensis (Starlet sea anemone).